The chain runs to 401 residues: Probable tRNA sulfurtransferase (401 aa).

A THUMP domain is found at 60–165 (EPIIDKLKTV…QDGTYVTCHD (106 aa)). Residues 183 to 184 (ML), 208 to 209 (HF), arginine 265, glycine 287, and glutamine 296 contribute to the ATP site.

It belongs to the ThiI family.

It localises to the cytoplasm. It carries out the reaction [ThiI sulfur-carrier protein]-S-sulfanyl-L-cysteine + a uridine in tRNA + 2 reduced [2Fe-2S]-[ferredoxin] + ATP + H(+) = [ThiI sulfur-carrier protein]-L-cysteine + a 4-thiouridine in tRNA + 2 oxidized [2Fe-2S]-[ferredoxin] + AMP + diphosphate. The enzyme catalyses [ThiS sulfur-carrier protein]-C-terminal Gly-Gly-AMP + S-sulfanyl-L-cysteinyl-[cysteine desulfurase] + AH2 = [ThiS sulfur-carrier protein]-C-terminal-Gly-aminoethanethioate + L-cysteinyl-[cysteine desulfurase] + A + AMP + 2 H(+). The protein operates within cofactor biosynthesis; thiamine diphosphate biosynthesis. Its function is as follows. Catalyzes the ATP-dependent transfer of a sulfur to tRNA to produce 4-thiouridine in position 8 of tRNAs, which functions as a near-UV photosensor. Also catalyzes the transfer of sulfur to the sulfur carrier protein ThiS, forming ThiS-thiocarboxylate. This is a step in the synthesis of thiazole, in the thiamine biosynthesis pathway. The sulfur is donated as persulfide by IscS. The chain is Probable tRNA sulfurtransferase from Geobacillus thermodenitrificans (strain NG80-2).